The following is a 426-amino-acid chain: Pannexin-1 (426 aa).

The Cytoplasmic segment spans residues M1–C40. An S-nitrosocysteine modification is found at C40. Residues I41–G61 traverse the membrane as a helical segment. Topologically, residues T62–H106 are extracellular. 2 disulfide bridges follow: C66/C264 and C84/C245. A helical membrane pass occupies residues K107 to W127. At R128–R216 the chain is on the cytoplasmic side. Residue Y198 is modified to Phosphotyrosine. A helical transmembrane segment spans residues L217 to S237. At S238–L277 the chain is on the extracellular side. N254 carries an N-linked (GlcNAc...) asparagine glycan. Residues I278–F298 traverse the membrane as a helical segment. The Cytoplasmic segment spans residues R299–C426. Residue C346 is modified to S-nitrosocysteine.

Belongs to the pannexin family. Homoheptameric. Post-translationally, S-nitrosylation inhibits channel currents and ATP release. N-glycosylation may play a role in cell surface targeting. Exists in three glycosylation states: non-glycosylated (GLY0), high-mannose glycosylated (GLY1), and fully mature glycosylated (GLY2). In terms of processing, phosphorylated at Tyr-198 by SRC. Phosphorylation activates ATP release. Constitutively phosphorylated in vascular smooth muscle cells. Post-translationally, cleaved by CASP3 and CASP7 during apoptosis. Cleavage opens the channel for the release of metabolites and induces plasma membrane permeability during apoptosis. Widely expressed, including in cartilage, skin, spleen and brain.

Its subcellular location is the cell membrane. The protein resides in the endoplasmic reticulum membrane. It catalyses the reaction chloride(in) = chloride(out). It carries out the reaction iodide(out) = iodide(in). The catalysed reaction is Ca(2+)(in) = Ca(2+)(out). The enzyme catalyses ATP(in) = ATP(out). It catalyses the reaction K(+)(in) = K(+)(out). It carries out the reaction Na(+)(in) = Na(+)(out). The catalysed reaction is nitrate(in) = nitrate(out). The enzyme catalyses L-aspartate(out) = L-aspartate(in). It catalyses the reaction L-glutamate(out) = L-glutamate(in). It carries out the reaction D-gluconate(in) = D-gluconate(out). The catalysed reaction is spermidine(in) = spermidine(out). Ion channel involved in a variety of physiological functions such as blood pressure regulation, apoptotic cell clearance and oogenesis. Forms anion-selective channels with relatively low conductance and an order of permeabilities: nitrate&gt;iodide&gt;chlroride&gt;&gt;aspartate=glutamate=gluconate. Can release ATP upon activation through phosphorylation or cleavage at C-terminus. May play a role as a Ca(2+)-leak channel to regulate ER Ca(2+) homeostasis. Functionally, during apoptosis and after cleavage by caspases of the C-terminal tail, acts as a plasma membrane channel which mediates the regulated release of find-me signals, such as nucleotides ATP and UTP, and selective plasme membrane permeability. This is Pannexin-1 from Mus musculus (Mouse).